Here is a 239-residue protein sequence, read N- to C-terminus: Tetraspanin-9 (239 aa).

Over 1–13 (MARGCLCCLKYMM) the chain is Cytoplasmic. A helical transmembrane segment spans residues 14–34 (FLFNLIFWLCGCGLLGVGIWL). The Extracellular segment spans residues 35–55 (SVSQGNFATFSPSFPSLSAAN). Residues 56 to 76 (LVIAIGTIVMVTGFLGCLGAI) form a helical membrane-spanning segment. Topologically, residues 77 to 85 (KENRCLLLS) are cytoplasmic. Residues 86-106 (FFIVLLIILLAELILIILFFV) traverse the membrane as a helical segment. The Extracellular portion of the chain corresponds to 107–203 (YMDKVNENAR…VKMWFDDNKH (97 aa)). Asn-180 carries N-linked (GlcNAc...) asparagine glycosylation. A helical membrane pass occupies residues 204–224 (VLGTVGMCILIMQILGMAFSM). The Cytoplasmic segment spans residues 225–239 (TLFQHIHRTGKKYDA).

Belongs to the tetraspanin (TM4SF) family. As to quaternary structure, found in a complex with GP6. Glycosylated.

Its subcellular location is the membrane. This is Tetraspanin-9 (TSPAN9) from Sus scrofa (Pig).